A 188-amino-acid chain; its full sequence is dTTP/UTP pyrophosphatase (188 aa).

D67 functions as the Proton acceptor in the catalytic mechanism.

Belongs to the Maf family. YhdE subfamily. Requires a divalent metal cation as cofactor.

Its subcellular location is the cytoplasm. The catalysed reaction is dTTP + H2O = dTMP + diphosphate + H(+). It carries out the reaction UTP + H2O = UMP + diphosphate + H(+). In terms of biological role, nucleoside triphosphate pyrophosphatase that hydrolyzes dTTP and UTP. May have a dual role in cell division arrest and in preventing the incorporation of modified nucleotides into cellular nucleic acids. In Thermococcus kodakarensis (strain ATCC BAA-918 / JCM 12380 / KOD1) (Pyrococcus kodakaraensis (strain KOD1)), this protein is dTTP/UTP pyrophosphatase.